The sequence spans 173 residues: Large ribosomal subunit protein uL10 (173 aa).

It belongs to the universal ribosomal protein uL10 family. Part of the ribosomal stalk of the 50S ribosomal subunit. The N-terminus interacts with L11 and the large rRNA to form the base of the stalk. The C-terminus forms an elongated spine to which L12 dimers bind in a sequential fashion forming a multimeric L10(L12)X complex.

Forms part of the ribosomal stalk, playing a central role in the interaction of the ribosome with GTP-bound translation factors. The chain is Large ribosomal subunit protein uL10 from Cupriavidus necator (strain ATCC 17699 / DSM 428 / KCTC 22496 / NCIMB 10442 / H16 / Stanier 337) (Ralstonia eutropha).